The chain runs to 637 residues: Proton myo-inositol cotransporter (637 aa).

At 1-65 (MSRKASEDVE…AARRQFQRDE (65 aa)) the chain is on the cytoplasmic side. Ser-6 carries the phosphoserine modification. The tract at residues 16–38 (LSSLMGERRRRQPEPGAPGGERS) is disordered. Phosphoserine occurs at positions 44 and 47. The helical transmembrane segment at 66 to 86 (TPAFVYAAAAFSALGGFLFGY) threads the bilayer. Residues 87–114 (DTGVVSGAMLLLRRQMRLGAMWQELLVS) lie on the Extracellular side of the membrane. A helical membrane pass occupies residues 115-135 (GAVGAAAVAALAGGALNGALG). Topologically, residues 136-137 (RR) are cytoplasmic. The chain crosses the membrane as a helical span at residues 138-158 (SAILLASALCTVGSAVLAAAA). Over 159–167 (NKETLLAGR) the chain is Extracellular. A helical membrane pass occupies residues 168–188 (LVVGLGIGIASMTVPVYIAEV). The Cytoplasmic segment spans residues 189-201 (SPPNLRGRLVTIN). The helical transmembrane segment at 202–222 (TLFITGGQFFASVVDGAFSYL) threads the bilayer. The Extracellular segment spans residues 223 to 228 (QKDGWR). The helical transmembrane segment at 229–249 (YMLGLAAIPAVIQFLGFLFLP) threads the bilayer. At 250–313 (ESPRWLIQKG…RMLSYPPTRR (64 aa)) the chain is on the cytoplasmic side. The helical transmembrane segment at 314 to 334 (ALAVGCGLQMFQQLSGINTIM) threads the bilayer. Over 335–352 (YYSATILQMSGVEDDRLA) the chain is Extracellular. Residues 353–373 (IWLASITAFTNFIFTLVGVWL) form a helical membrane-spanning segment. The Cytoplasmic segment spans residues 374–382 (VEKVGRRKL). Residues 383–403 (TFGSLAGTTVALTILALGFLL) form a helical membrane-spanning segment. Topologically, residues 404 to 497 (SAQVSPRVTF…SFCPTPYSWT (94 aa)) are extracellular. N-linked (GlcNAc...) asparagine glycans are attached at residues Asn-422, Asn-447, and Asn-474. Residues 498 to 518 (ALVGLVLYLVFFAPGMGPMPW) form a helical membrane-spanning segment. The Cytoplasmic portion of the chain corresponds to 519–538 (TVNSEIYPLWARSTGNACSA). A helical transmembrane segment spans residues 539-559 (GINWIFNVLVSLTFLHTAEYL). The Extracellular portion of the chain corresponds to 560–562 (TYY). A helical transmembrane segment spans residues 563-583 (GAFFLYAGFAAVGLLFVYGCL). Topologically, residues 584–637 (PETKGKKLEEIESLFDHRLCTCGTADSDEGRYIEYIRVKGSNYHLSDNDASDVE) are cytoplasmic. 2 positions are modified to phosphoserine: Ser-629 and Ser-634.

Belongs to the major facilitator superfamily. Sugar transporter (TC 2.A.1.1) family.

Its subcellular location is the cell membrane. The enzyme catalyses myo-inositol(out) + H(+)(out) = myo-inositol(in) + H(+)(in). In terms of biological role, h(+)-myo-inositol cotransporter. Can also transport related stereoisomers. The chain is Proton myo-inositol cotransporter from Rattus norvegicus (Rat).